The following is a 59-amino-acid chain: MFTLKKSMLLLLFLGTISLTLCEEERDANEEEENGGEVKVEEKRFIGPIISALASLFGG.

Residues 1-22 (MFTLKKSMLLLLFLGTISLTLC) form the signal peptide. Positions 23–42 (EEERDANEEEENGGEVKVEE) are excised as a propeptide.

Belongs to the frog skin active peptide (FSAP) family. Temporin subfamily. Expressed by the skin glands.

It is found in the secreted. In terms of biological role, antimicrobial peptide. This is Temporin-CDYe from Rana dybowskii (Dybovsky's frog).